Reading from the N-terminus, the 165-residue chain is Calcium-binding protein H (165 aa).

4 consecutive EF-hand domains span residues Gln7–Lys42, Tyr43–Asp78, Tyr88–Asp123, and His124–Ser159. 20 residues coordinate Ca(2+): Asp20, Asp22, Asn24, Glu26, Glu31, Asp56, Asp58, Glu60, Lys62, Glu67, Asp101, Asn103, Asp105, Arg107, Glu112, Asp137, Asn139, Asp141, Tyr143, and Glu148.

The protein is Calcium-binding protein H (cbpH) of Dictyostelium discoideum (Social amoeba).